The chain runs to 293 residues: Elongation factor Ts (293 aa).

An involved in Mg(2+) ion dislocation from EF-Tu region spans residues 80–83; it reads TDFV.

The protein belongs to the EF-Ts family.

It localises to the cytoplasm. In terms of biological role, associates with the EF-Tu.GDP complex and induces the exchange of GDP to GTP. It remains bound to the aminoacyl-tRNA.EF-Tu.GTP complex up to the GTP hydrolysis stage on the ribosome. The chain is Elongation factor Ts from Burkholderia cenocepacia (strain ATCC BAA-245 / DSM 16553 / LMG 16656 / NCTC 13227 / J2315 / CF5610) (Burkholderia cepacia (strain J2315)).